Consider the following 223-residue polypeptide: Adenylate kinase (223 aa).

ATP is bound at residue 17–22 (GAGKGT). Positions 37–66 (STGDMLRSQVAKGTPLGVEAKKIMDQGGLV) are NMP. AMP is bound by residues threonine 38, arginine 43, 64–66 (GLV), 93–96 (GFPR), and glutamine 100. The segment at 134–171 (GRLVHPSSGRSYHKLFNPPKVEMTDDVTGEPLVQRSDD) is LID. ATP-binding positions include arginine 135 and 144 to 145 (SY). AMP is bound by residues arginine 168 and arginine 179. Glutamine 207 contributes to the ATP binding site.

Belongs to the adenylate kinase family. AK2 subfamily. As to quaternary structure, monomer.

It is found in the cytoplasm. The protein localises to the cytosol. It localises to the mitochondrion intermembrane space. The catalysed reaction is AMP + ATP = 2 ADP. Catalyzes the reversible transfer of the terminal phosphate group between ATP and AMP. Plays an important role in cellular energy homeostasis and in adenine nucleotide metabolism. Adenylate kinase activity is critical for regulation of the phosphate utilization and the AMP de novo biosynthesis pathways. The chain is Adenylate kinase from Vanderwaltozyma polyspora (strain ATCC 22028 / DSM 70294 / BCRC 21397 / CBS 2163 / NBRC 10782 / NRRL Y-8283 / UCD 57-17) (Kluyveromyces polysporus).